The chain runs to 277 residues: PTS system sorbose-specific EIIC component (277 aa).

5 helical membrane passes run 1–21, 92–112, 133–153, 177–197, and 219–239; these read MAIS…VGMG, IQKG…LTVL, FTAI…RVSI, VITG…YAMI, and YLKL…IVYV. The 235-residue stretch at 3-237 folds into the PTS EIIC type-4 domain; that stretch reads ISTIQIILIF…GAVGLIFAIV (235 aa).

Its subcellular location is the cell membrane. Its function is as follows. The phosphoenolpyruvate-dependent sugar phosphotransferase system (PTS), a major carbohydrate active transport system, catalyzes the phosphorylation of incoming sugar substrates concomitant with their translocation across the cell membrane. The enzyme II SorABCD PTS system is involved in L-sorbose transport. The chain is PTS system sorbose-specific EIIC component from Lacticaseibacillus casei (Lactobacillus casei).